The following is a 90-amino-acid chain: Putative septation protein SpoVG (90 aa).

The protein belongs to the SpoVG family.

Could be involved in septation. The polypeptide is Putative septation protein SpoVG (Clostridium perfringens (strain SM101 / Type A)).